Consider the following 185-residue polypeptide: Protein N-terminal glutamine amidohydrolase (185 aa).

Catalysis depends on residues Cys-14, His-62, and Asp-78.

This sequence belongs to the NTAQ1 family. As to quaternary structure, monomer.

The catalysed reaction is N-terminal L-glutaminyl-[protein] + H2O = N-terminal L-glutamyl-[protein] + NH4(+). In terms of biological role, mediates the side-chain deamidation of N-terminal glutamine residues to glutamate, an important step in N-end rule pathway of protein degradation. Conversion of the resulting N-terminal glutamine to glutamate renders the protein susceptible to arginylation, polyubiquitination and degradation as specified by the N-end rule. Does not act on substrates with internal or C-terminal glutamine and does not act on non-glutamine residues in any position. The protein is Protein N-terminal glutamine amidohydrolase of Caenorhabditis briggsae.